Here is a 210-residue protein sequence, read N- to C-terminus: MGVRAQQKEKTRRSLVEAAFSQLSAERSFASLSLREVAREAGIAPTSFYRHFRDVDELGLTMVDESGLMLRQLMRQARQRIAKGGSVIRTSVSTFMEFIGNNPNAFRLLLRERSGTSAAFRAAVAREIQHFIAELADYLELENHMPRAFTEAQAEAMVTIVFSAGAEALDVGAEQRRQLEERLVLQLRMIAKGAYYWYRREQEKMAHHSE.

Residues Lys10 to Leu70 enclose the HTH tetR-type domain. Residues Ser33–Phe52 constitute a DNA-binding region (H-T-H motif).

In terms of assembly, homodimer.

It localises to the cytoplasm. Represses the transcription of fabB, involved in unsaturated fatty acid (UFA) biosynthesis. By controlling UFA production, FabR directly influences the physical properties of the membrane bilayer. The chain is HTH-type transcriptional repressor FabR from Citrobacter koseri (strain ATCC BAA-895 / CDC 4225-83 / SGSC4696).